A 357-amino-acid chain; its full sequence is Protein-L-isoaspartate O-methyltransferase domain-containing protein 1 (357 aa).

Gly-2 is lipidated: N-myristoyl glycine. Ser-64 is a catalytic residue. 3 adoMet binding motif regions span residues 85 to 94 (LNLGSGTGYL), 160 to 164 (YDRIY), and 181 to 191 (LKVGGILVMPI). Positions 240 to 250 (VRNLQDLARIY) are BC-box. The interval 299–331 (PLDSEEDEKMEEDSKEEEEKEHIEAMKREEPPQ) is disordered. A compositionally biased stretch (acidic residues) spans 301 to 317 (DSEEDEKMEEDSKEEEE). Residues 318-331 (KEHIEAMKREEPPQ) show a composition bias toward basic and acidic residues. A CUL-box region spans residues 341–344 (LPLP).

It belongs to the methyltransferase superfamily. L-isoaspartyl/D-aspartyl protein methyltransferase family. In terms of assembly, component of the probable ECS(PCMTD1) E3 ubiquitin-protein ligase complex, at least composed of CUL5, ELOB, ELOC, RBX2 and PCMTD1. Interacts (via the BC-box) with ELOB and ELOC; the interaction is direct and stabilizes PCMTD1.

Its subcellular location is the cytoplasm. It is found in the membrane. Functionally, substrate recognition component of an ECS (Elongin BC-CUL5-SOCS-box protein) E3 ubiquitin ligase complex which mediates the ubiquitination and subsequent proteasomal degradation of target proteins. Specifically binds to the methyltransferase cofactor S-adenosylmethionine (AdoMet) via the N-terminal AdoMet binding motif, but does not display methyltransferase activity. May provide an alternate maintenance pathway for modified proteins by acting as a damage-specific E3 ubiquitin ligase adaptor protein. This chain is Protein-L-isoaspartate O-methyltransferase domain-containing protein 1 (Pcmtd1), found in Mus musculus (Mouse).